The chain runs to 1026 residues: Multidrug resistance protein MdtC (1026 aa).

11 helical membrane passes run 15–35 (ILIA…LPVA), 333–353 (EVEE…FLFL), 360–380 (LIPA…MYLC), 387–407 (LSLM…IVVL), 431–451 (VGFT…PLLL), 463–483 (FAVT…TLTP), 528–548 (LVGV…IAIP), 853–873 (LILI…LYES), 897–917 (LFNA…IGIV), 953–973 (PIMM…LSGG), and 984–1004 (ITIV…TPVV).

Belongs to the resistance-nodulation-cell division (RND) (TC 2.A.6) family. MdtC subfamily. Part of a tripartite efflux system composed of MdtA, MdtB and MdtC. MdtC forms a heteromultimer with MdtB.

It localises to the cell inner membrane. In Salmonella enteritidis PT4 (strain P125109), this protein is Multidrug resistance protein MdtC.